Consider the following 271-residue polypeptide: ATP synthase subunit a (271 aa).

Helical transmembrane passes span 40 to 60 (TINIDSMFFSVVLGLLFLVLF), 100 to 120 (LIAPLALTIFVWVFLMNLMDL), 146 to 166 (DVNVTLSMALGVFILILFYSI), 220 to 240 (LIFILIAGLLPWWSQWILNVP), and 242 to 262 (AIFHILIITLQAFIFMVLTIV).

It belongs to the ATPase A chain family. F-type ATPases have 2 components, CF(1) - the catalytic core - and CF(0) - the membrane proton channel. CF(1) has five subunits: alpha(3), beta(3), gamma(1), delta(1), epsilon(1). CF(0) has three main subunits: a(1), b(2) and c(9-12). The alpha and beta chains form an alternating ring which encloses part of the gamma chain. CF(1) is attached to CF(0) by a central stalk formed by the gamma and epsilon chains, while a peripheral stalk is formed by the delta and b chains.

Its subcellular location is the cell inner membrane. Key component of the proton channel; it plays a direct role in the translocation of protons across the membrane. The sequence is that of ATP synthase subunit a from Escherichia coli O1:K1 / APEC.